Here is a 322-residue protein sequence, read N- to C-terminus: MVMRKLQLPLSQTQKVRFERAIERLQSLSSSANSDASVIVTDSIPVNHDDAFLKGHGTSEVDGELLATVCGVVERVDKLVYVRTLRARYKPEVGDIVVGRVIEVAQKRWRVELNFNQDGVLMLSSMNMPDGIQRRRTSVDELNMRNIFVEHDVVCAEVRNFQHDGSLQLQARSQKYGKLEKGQLLKVDPYLVKRSKHHFHYVESLGIDLIIGCNGFIWVGEHVEVRDPMAIDDQKDEEMISSSSTGKEQSHIPLETRQTICRIGNAIRVLSNLGFTVTLEVIMETVNLSNSKNIDIHDMLGSEFHVVVAENEAERRRTKRKK.

The S1 motif domain maps to 94-172 (GDIVVGRVIE…HDGSLQLQAR (79 aa)). The KH domain maps to 182 to 237 (GQLLKVDPYLVKRSKHHFHYVESLGIDLIIGCNGFIWVGEHVEVRDPMAIDDQKDE).

It belongs to the RRP4 family. Component of the RNA exosome complex. Interacts with RPP41. As to expression, expressed in roots, stems, rosette and cauline leaves, flowers and siliques.

Its subcellular location is the cytoplasm. The protein localises to the nucleus. It is found in the nucleolus. Functionally, non-catalytic component of the RNA exosome complex which has 3'-&gt;5' exoribonuclease activity and participates in a multitude of cellular RNA processing, maturation and degradation events. In vitro, is an active and distributive 3'-&gt;5' exonuclease requiring a free 3'-OH on the substrate and releasing nucleoside 5'-monophosphates. Required for normal embryo development. The polypeptide is Exosome complex component RRP4 homolog (Arabidopsis thaliana (Mouse-ear cress)).